The following is a 492-amino-acid chain: Catalase-1 (492 aa).

Catalysis depends on residues His-65 and Asn-138. Residue Tyr-348 coordinates heme.

Belongs to the catalase family. Homotetramer. Requires heme as cofactor.

It localises to the peroxisome. The protein localises to the glyoxysome. It carries out the reaction 2 H2O2 = O2 + 2 H2O. Its function is as follows. Occurs in almost all aerobically respiring organisms and serves to protect cells from the toxic effects of hydrogen peroxide. The sequence is that of Catalase-1 (CAT1) from Triticum aestivum (Wheat).